The following is a 79-amino-acid chain: Acyl carrier protein (79 aa).

In terms of domain architecture, Carrier spans A4–K79. S39 is subject to O-(pantetheine 4'-phosphoryl)serine.

This sequence belongs to the acyl carrier protein (ACP) family. In terms of processing, 4'-phosphopantetheine is transferred from CoA to a specific serine of apo-ACP by AcpS. This modification is essential for activity because fatty acids are bound in thioester linkage to the sulfhydryl of the prosthetic group.

The protein resides in the cytoplasm. The protein operates within lipid metabolism; fatty acid biosynthesis. In terms of biological role, carrier of the growing fatty acid chain in fatty acid biosynthesis. The polypeptide is Acyl carrier protein (Chlorobaculum parvum (strain DSM 263 / NCIMB 8327) (Chlorobium vibrioforme subsp. thiosulfatophilum)).